We begin with the raw amino-acid sequence, 778 residues long: Beta-phellandrene synthase (neryl-diphosphate-cyclizing), chloroplastic (778 aa).

Residues 1–36 constitute a chloroplast transit peptide; that stretch reads MIVGYRSTIITLSHPKLGNGKTISSNAIFQRSCRVR. Residues Asp531, Asn676, and Glu684 each contribute to the Mg(2+) site. The DDXXD motif signature appears at 531-535; that stretch reads DDHFE.

Belongs to the terpene synthase family. Tpse subfamily. The cofactor is Mg(2+). As to expression, trichomes.

It is found in the plastid. The protein localises to the chloroplast. It catalyses the reaction neryl diphosphate = beta-phellandrene + diphosphate. Monoterpene synthase catalyzing the production of beta-phellandrene from neryl diphosphate. Also produces lower amounts of delta-2-carene, alpha-phellandrene and limonene. When incubated in vitro with geranyl diphosphate, catalyzes the formation of acyclic myrcene and ocimene as major products in addition to beta-phellandrene. The polypeptide is Beta-phellandrene synthase (neryl-diphosphate-cyclizing), chloroplastic (PHS1) (Solanum lycopersicum (Tomato)).